The chain runs to 347 residues: S-adenosylmethionine:tRNA ribosyltransferase-isomerase (347 aa).

Belongs to the QueA family. As to quaternary structure, monomer.

Its subcellular location is the cytoplasm. It catalyses the reaction 7-aminomethyl-7-carbaguanosine(34) in tRNA + S-adenosyl-L-methionine = epoxyqueuosine(34) in tRNA + adenine + L-methionine + 2 H(+). It participates in tRNA modification; tRNA-queuosine biosynthesis. In terms of biological role, transfers and isomerizes the ribose moiety from AdoMet to the 7-aminomethyl group of 7-deazaguanine (preQ1-tRNA) to give epoxyqueuosine (oQ-tRNA). The sequence is that of S-adenosylmethionine:tRNA ribosyltransferase-isomerase from Exiguobacterium sibiricum (strain DSM 17290 / CCUG 55495 / CIP 109462 / JCM 13490 / 255-15).